The following is a 186-amino-acid chain: dTTP/UTP pyrophosphatase (186 aa).

Asp67 serves as the catalytic Proton acceptor.

The protein belongs to the Maf family. YhdE subfamily. A divalent metal cation serves as cofactor.

Its subcellular location is the cytoplasm. It catalyses the reaction dTTP + H2O = dTMP + diphosphate + H(+). It carries out the reaction UTP + H2O = UMP + diphosphate + H(+). In terms of biological role, nucleoside triphosphate pyrophosphatase that hydrolyzes dTTP and UTP. May have a dual role in cell division arrest and in preventing the incorporation of modified nucleotides into cellular nucleic acids. The chain is dTTP/UTP pyrophosphatase from Carboxydothermus hydrogenoformans (strain ATCC BAA-161 / DSM 6008 / Z-2901).